Consider the following 251-residue polypeptide: Isopentenyl-diphosphate delta-isomerase (251 aa).

Lys-49 serves as a coordination point for substrate. Residues His-53 and His-66 each contribute to the Mg(2+) site. A Nudix hydrolase domain is found at 64–212; sequence LLHRAFSVFL…SNSFTPWFKL (149 aa). Positions 86 and 90 each coordinate substrate. Cys-102 is an active-site residue. Ser-103 provides a ligand contact to substrate. Positions 162 and 164 each coordinate Mg(2+). Glu-164 is a catalytic residue.

It belongs to the IPP isomerase type 1 family. Mg(2+) is required as a cofactor.

It is found in the cytoplasm. The catalysed reaction is isopentenyl diphosphate = dimethylallyl diphosphate. The protein operates within isoprenoid biosynthesis; dimethylallyl diphosphate biosynthesis; dimethylallyl diphosphate from isopentenyl diphosphate: step 1/1. Its function is as follows. Isopentenyl-diphosphate delta-isomerase; part of the second module of ergosterol biosynthesis pathway that includes the middle steps of the pathway. The second module is carried out in the vacuole and involves the formation of farnesyl diphosphate, which is also an important intermediate in the biosynthesis of ubiquinone, dolichol, heme and prenylated proteins. Activity by the mevalonate kinase first converts mevalonate into 5-phosphomevalonate. 5-phosphomevalonate is then further converted to 5-diphosphomevalonate by the phosphomevalonate kinase. The diphosphomevalonate decarboxylase then produces isopentenyl diphosphate. The isopentenyl-diphosphate delta-isomerase then catalyzes the 1,3-allylic rearrangement of the homoallylic substrate isopentenyl (IPP) to its highly electrophilic allylic isomer, dimethylallyl diphosphate (DMAPP). Finally the farnesyl diphosphate synthase catalyzes the sequential condensation of isopentenyl pyrophosphate with dimethylallyl pyrophosphate, and then with the resultant geranylpyrophosphate to the ultimate product farnesyl pyrophosphate. This Phaffia rhodozyma (Yeast) protein is Isopentenyl-diphosphate delta-isomerase.